The following is a 142-amino-acid chain: Ig heavy chain V region IR2 (142 aa).

An N-terminal signal peptide occupies residues 1–19 (MDLRLTYVFIVAILKGVLC). In terms of domain architecture, Ig-like spans 20 to 133 (EVKLEESGGG…YSENWFVYWG (114 aa)).

The polypeptide is Ig heavy chain V region IR2 (Rattus norvegicus (Rat)).